A 750-amino-acid polypeptide reads, in one-letter code: Polyribonucleotide nucleotidyltransferase (750 aa).

The Mg(2+) site is built by Asp523 and Asp529. One can recognise a KH domain in the interval Pro589–Ile648. Positions Gly660–Val729 constitute an S1 motif domain.

Belongs to the polyribonucleotide nucleotidyltransferase family. The cofactor is Mg(2+).

It is found in the cytoplasm. The enzyme catalyses RNA(n+1) + phosphate = RNA(n) + a ribonucleoside 5'-diphosphate. Functionally, involved in mRNA degradation. Catalyzes the phosphorolysis of single-stranded polyribonucleotides processively in the 3'- to 5'-direction. The chain is Polyribonucleotide nucleotidyltransferase from Saccharopolyspora erythraea (strain ATCC 11635 / DSM 40517 / JCM 4748 / NBRC 13426 / NCIMB 8594 / NRRL 2338).